The sequence spans 296 residues: Nucleotide-binding protein SPJ_1472 (296 aa).

Position 13 to 20 (13 to 20 (GMSGAGKT)) interacts with ATP. 63–66 (DMRS) contributes to the GTP binding site.

Belongs to the RapZ-like family.

In terms of biological role, displays ATPase and GTPase activities. This chain is Nucleotide-binding protein SPJ_1472, found in Streptococcus pneumoniae (strain JJA).